The following is a 210-amino-acid chain: Large ribosomal subunit protein bL25 (210 aa).

Residues 1–23 form a disordered region; that stretch reads MSDIGTLSAKGRDRAGKGAARAT.

Belongs to the bacterial ribosomal protein bL25 family. CTC subfamily. In terms of assembly, part of the 50S ribosomal subunit; part of the 5S rRNA/L5/L18/L25 subcomplex. Contacts the 5S rRNA. Binds to the 5S rRNA independently of L5 and L18.

Functionally, this is one of the proteins that binds to the 5S RNA in the ribosome where it forms part of the central protuberance. The chain is Large ribosomal subunit protein bL25 from Rhodospirillum rubrum (strain ATCC 11170 / ATH 1.1.1 / DSM 467 / LMG 4362 / NCIMB 8255 / S1).